The primary structure comprises 157 residues: SsrA-binding protein (157 aa).

Belongs to the SmpB family.

Its subcellular location is the cytoplasm. Its function is as follows. Required for rescue of stalled ribosomes mediated by trans-translation. Binds to transfer-messenger RNA (tmRNA), required for stable association of tmRNA with ribosomes. tmRNA and SmpB together mimic tRNA shape, replacing the anticodon stem-loop with SmpB. tmRNA is encoded by the ssrA gene; the 2 termini fold to resemble tRNA(Ala) and it encodes a 'tag peptide', a short internal open reading frame. During trans-translation Ala-aminoacylated tmRNA acts like a tRNA, entering the A-site of stalled ribosomes, displacing the stalled mRNA. The ribosome then switches to translate the ORF on the tmRNA; the nascent peptide is terminated with the 'tag peptide' encoded by the tmRNA and targeted for degradation. The ribosome is freed to recommence translation, which seems to be the essential function of trans-translation. The chain is SsrA-binding protein from Chlorobium phaeovibrioides (strain DSM 265 / 1930) (Prosthecochloris vibrioformis (strain DSM 265)).